We begin with the raw amino-acid sequence, 103 residues long: Small ribosomal subunit protein uS14c (103 aa).

The segment at 27-56 (SKKKIRSKVSPLSLSEKTKMQEKLQSLPRN) is disordered.

It belongs to the universal ribosomal protein uS14 family. Part of the 30S ribosomal subunit.

Its subcellular location is the plastid. The protein resides in the chloroplast. Binds 16S rRNA, required for the assembly of 30S particles. This chain is Small ribosomal subunit protein uS14c, found in Zea mays (Maize).